Consider the following 629-residue polypeptide: Arginyl-tRNA--protein transferase 1 (629 aa).

2 disordered regions span residues 274–298 (QNNS…TNEP) and 353–405 (PDES…ITKE). Over residues 282–295 (TTTATTATTTTTTT) the composition is skewed to low complexity. Positions 356–396 (SYDDYVYDGKDDDDDDDDKDEKEDDEDEDQEDDEDEDDGNN) are enriched in acidic residues.

Belongs to the R-transferase family.

It catalyses the reaction an N-terminal L-alpha-aminoacyl-[protein] + L-arginyl-tRNA(Arg) = an N-terminal L-arginyl-L-aminoacyl-[protein] + tRNA(Arg) + H(+). Involved in the post-translational conjugation of arginine to the N-terminal aspartate or glutamate of a protein. This arginylation is required for degradation of the protein via the ubiquitin pathway. Does not arginylate cysteine residues. This Dictyostelium discoideum (Social amoeba) protein is Arginyl-tRNA--protein transferase 1 (ate1).